Reading from the N-terminus, the 101-residue chain is Small ribosomal subunit protein uS14 (101 aa).

This sequence belongs to the universal ribosomal protein uS14 family. In terms of assembly, part of the 30S ribosomal subunit. Contacts proteins S3 and S10.

In terms of biological role, binds 16S rRNA, required for the assembly of 30S particles and may also be responsible for determining the conformation of the 16S rRNA at the A site. The chain is Small ribosomal subunit protein uS14 from Pelagibacter ubique (strain HTCC1062).